The primary structure comprises 94 residues: Putative defensin-like protein 88 (94 aa).

Positions 1–26 (MATQKFSYFLLVLLMVFALILPSIIS) are cleaved as a signal peptide. 3 disulfide bridges follow: Cys32–Cys72, Cys38–Cys59, and Cys48–Cys71.

It belongs to the DEFL family.

Its subcellular location is the secreted. This is Putative defensin-like protein 88 from Arabidopsis thaliana (Mouse-ear cress).